The chain runs to 110 residues: B3 domain-containing protein LOC_Os02g10420 (110 aa).

The TF-B3 DNA-binding region spans 1–104; sequence MSAMLNENVP…VLSVTVHKAD (104 aa).

The protein localises to the nucleus. This Oryza sativa subsp. japonica (Rice) protein is B3 domain-containing protein LOC_Os02g10420.